The following is a 106-amino-acid chain: Large ribosomal subunit protein bL21 (106 aa).

This sequence belongs to the bacterial ribosomal protein bL21 family. Part of the 50S ribosomal subunit. Contacts protein L20.

This protein binds to 23S rRNA in the presence of protein L20. This chain is Large ribosomal subunit protein bL21, found in Chlamydia felis (strain Fe/C-56) (Chlamydophila felis).